Consider the following 428-residue polypeptide: Phosphoribosylamine--glycine ligase (428 aa).

In terms of domain architecture, ATP-grasp spans 109 to 316; that stretch reads KDFLHRHGIP…LVELCLAALD (208 aa). Residue 135–196 coordinates ATP; sequence LRQVGAPVVV…EEFLTGEEAS (62 aa). A disordered region spans residues 211 to 235; that stretch reads SSQDHKARDDGDRGPNTGGMGAYSP. The span at 213–223 shows a compositional bias: basic and acidic residues; the sequence is QDHKARDDGDR. 2 residues coordinate Mg(2+): E286 and N288.

Belongs to the GARS family. Requires Mg(2+) as cofactor. It depends on Mn(2+) as a cofactor.

It carries out the reaction 5-phospho-beta-D-ribosylamine + glycine + ATP = N(1)-(5-phospho-beta-D-ribosyl)glycinamide + ADP + phosphate + H(+). Its pathway is purine metabolism; IMP biosynthesis via de novo pathway; N(1)-(5-phospho-D-ribosyl)glycinamide from 5-phospho-alpha-D-ribose 1-diphosphate: step 2/2. The chain is Phosphoribosylamine--glycine ligase (purD) from Allochromatium vinosum (strain ATCC 17899 / DSM 180 / NBRC 103801 / NCIMB 10441 / D) (Chromatium vinosum).